A 368-amino-acid polypeptide reads, in one-letter code: MRSVELLSLAALGSLVAAAPAPSRVSDLTKRSSTCTFTAASQATESASGCSEIVLDNIEVPAGETLDLSDVDDGTTIVFEGTTTFGYKEWSGPLIRFGGKDITVKQNSGAVIDGEGSRWWDGEGTNGGKTKPKFMYAHSLEDSTITGLSIKNTPVQAISVQATNLYLIDITIDNSDGDDNGGHNTDGFDISESTGVYIRGATVKNQDDCIAINSGENIEFSGGTCSGGHGLSIGSVGGRDDNTVKNVTITDSTVTDSANGVRIKTVYDATGSVSEVTYSNIKLSGITDYGIVIEQDYENGSPTGTPTTGVPITDLTIDGVTGTVESDAVEVYILCGDGSCSDWTWEGVDITGGETSSKCENVPSGASC.

A signal peptide spans 1-18 (MRSVELLSLAALGSLVAA). Positions 19–31 (APAPSRVSDLTKR) are excised as a propeptide. Cysteine 35 and cysteine 50 form a disulfide bridge. PbH1 repeat units follow at residues 140–162 (LEDSTITGLSIKNTPVQAISVQA), 167–192 (LIDITIDNSDGDDNGGHNTDGFDISE), 193–214 (STGVYIRGATVKNQDDCIAINS), 215–235 (GENIEFSGGTCSGGHGLSIGS), 244–265 (VKNVTITDSTVTDSANGVRIKT), 273–295 (VSEVTYSNIKLSGITDYGIVIEQ), and 307–352 (TTGV…DITG). Aspartate 207 functions as the Proton donor in the catalytic mechanism. A disulfide bridge links cysteine 209 with cysteine 225. Histidine 229 is a catalytic residue. Asparagine 246 carries an N-linked (GlcNAc...) asparagine glycan. Cystine bridges form between cysteine 335–cysteine 340 and cysteine 359–cysteine 368.

It belongs to the glycosyl hydrolase 28 family.

It localises to the secreted. The catalysed reaction is (1,4-alpha-D-galacturonosyl)n+m + H2O = (1,4-alpha-D-galacturonosyl)n + (1,4-alpha-D-galacturonosyl)m.. Its function is as follows. Involved in maceration and soft-rotting of plant tissue. Hydrolyzes the 1,4-alpha glycosidic bonds of de-esterified pectate in the smooth region of the plant cell wall. The chain is Probable endopolygalacturonase A (pgaA) from Neosartorya fischeri (strain ATCC 1020 / DSM 3700 / CBS 544.65 / FGSC A1164 / JCM 1740 / NRRL 181 / WB 181) (Aspergillus fischerianus).